The following is a 342-amino-acid chain: NLP effector protein Pc107869 (342 aa).

The first 19 residues, 1-19 (MKTGFFLFAACAALVAVQA), serve as a signal peptide directing secretion. N-linked (GlcNAc...) asparagine glycosylation is present at N24. Residues 41–125 (APRTKAPPTK…PTPDPGPWEA (85 aa)) are disordered. Residues 55 to 75 (QQSSLSGSQEQQQEQIETPAP) are compositionally biased toward low complexity. Positions 93–121 (TPAPTPAPTPAPTPAPTPAPTPAPTPDPG) are enriched in pro residues. Positions 226 to 232 (GHRHDWE) match the Hepta-peptide GHRHDWE motif motif.

It belongs to the Necrosis inducing protein (NPP1) family.

It localises to the secreted. Functionally, secreted effector that contributes strongly to virulence during infection by P.capsici. Induces cell death in the Solanaceae, including Nicotiana benthamiana. This Phytophthora capsici protein is NLP effector protein Pc107869.